The primary structure comprises 467 residues: tRNA modification GTPase MnmE (467 aa).

The (6S)-5-formyl-5,6,7,8-tetrahydrofolate site is built by Arg-27, Glu-89, and Arg-128. A TrmE-type G domain is found at 225–387 (GISMVIAGRP…LKQAIFTVVT (163 aa)). Residue Asn-235 coordinates K(+). GTP-binding positions include 235-240 (NVGKSS), 254-260 (TSIAGTT), 279-282 (DTAG), and 368-370 (SAR). Residue Ser-239 participates in Mg(2+) binding. 3 residues coordinate K(+): Thr-254, Ile-256, and Thr-259. Thr-260 serves as a coordination point for Mg(2+). Lys-467 lines the (6S)-5-formyl-5,6,7,8-tetrahydrofolate pocket.

The protein belongs to the TRAFAC class TrmE-Era-EngA-EngB-Septin-like GTPase superfamily. TrmE GTPase family. Homodimer. Heterotetramer of two MnmE and two MnmG subunits. It depends on K(+) as a cofactor.

It localises to the cytoplasm. Functionally, exhibits a very high intrinsic GTPase hydrolysis rate. Involved in the addition of a carboxymethylaminomethyl (cmnm) group at the wobble position (U34) of certain tRNAs, forming tRNA-cmnm(5)s(2)U34. The polypeptide is tRNA modification GTPase MnmE (Desulfotalea psychrophila (strain LSv54 / DSM 12343)).